The primary structure comprises 239 residues: Purine nucleoside phosphorylase DeoD-type (239 aa).

A purine D-ribonucleoside is bound at residue His5. Residues Gly21, Arg25, Arg44, and 88 to 91 (RVGS) contribute to the phosphate site. Residues 180 to 182 (EME) and 204 to 205 (SD) contribute to the a purine D-ribonucleoside site. Catalysis depends on Asp205, which acts as the Proton donor.

The protein belongs to the PNP/UDP phosphorylase family. Homohexamer; trimer of homodimers.

The catalysed reaction is a purine D-ribonucleoside + phosphate = a purine nucleobase + alpha-D-ribose 1-phosphate. It carries out the reaction a purine 2'-deoxy-D-ribonucleoside + phosphate = a purine nucleobase + 2-deoxy-alpha-D-ribose 1-phosphate. Functionally, catalyzes the reversible phosphorolytic breakdown of the N-glycosidic bond in the beta-(deoxy)ribonucleoside molecules, with the formation of the corresponding free purine bases and pentose-1-phosphate. The protein is Purine nucleoside phosphorylase DeoD-type of Salmonella agona (strain SL483).